The following is a 919-amino-acid chain: PAX3- and PAX7-binding protein 1 (919 aa).

Positions Met1–Arg11 are enriched in basic residues. 3 disordered regions span residues Met1–Glu120, Lys151–Phe206, and Ala237–Phe277. A Phosphoserine modification is found at Ser16. Acidic residues predominate over residues Ser16–Glu28. Residues Arg49–Pro59 show a composition bias toward low complexity. Residues Ala75 to Pro87 show a composition bias toward gly residues. Lys151 participates in a covalent cross-link: Glycyl lysine isopeptide (Lys-Gly) (interchain with G-Cter in SUMO1); alternate. Residue Lys151 forms a Glycyl lysine isopeptide (Lys-Gly) (interchain with G-Cter in SUMO2); alternate linkage. Residue Ser160 is modified to Phosphoserine. Residues Pro163–Asn174 are compositionally biased toward basic and acidic residues. Acidic residues predominate over residues Gly185–Lys195. Phosphoserine is present on Ser193. Residues Ala237–Glu258 are compositionally biased toward basic and acidic residues. Over residues Asp259–Asp270 the composition is skewed to acidic residues. A phosphoserine mark is found at Ser264, Ser297, Ser559, and Ser560. A necessary and sufficient for interaction with PAX7 region spans residues Thr380–Ser560. The interval Glu533–Ser566 is disordered. Phosphothreonine is present on Thr565.

Belongs to the GCF family. As to quaternary structure, interacts with PAX3 and PAX7. Interacts with WDR5; associates with a histone methyltransferase (HMT) complex composed at least of RBBP5, ASH2L, SET1, SET2 and KMT2A/MLL1, KMT2D/MLL2, KMT2C/MLL3 and KMT2B/MLL4 through direct interaction with WDR5. In terms of tissue distribution, ubiquitously expressed in all tissues tested including skeletal muscle. Expressed in primary myoblasts.

The protein localises to the nucleus. Its function is as follows. Adapter protein linking the transcription factors PAX3 and PAX7 to the histone methylation machinery and involved in myogenesis. Associates with a histone methyltransferase complex that specifically mediates dimethylation and trimethylation of 'Lys-4' of histone H3. Mediates the recruitment of that complex to the transcription factors PAX3 and PAX7 on chromatin to regulate the expression of genes involved in muscle progenitor cells proliferation including ID3 and CDC20. This Mus musculus (Mouse) protein is PAX3- and PAX7-binding protein 1 (Paxbp1).